Here is an 80-residue protein sequence, read N- to C-terminus: Exodeoxyribonuclease 7 small subunit (80 aa).

Belongs to the XseB family. In terms of assembly, heterooligomer composed of large and small subunits.

It localises to the cytoplasm. The catalysed reaction is Exonucleolytic cleavage in either 5'- to 3'- or 3'- to 5'-direction to yield nucleoside 5'-phosphates.. Bidirectionally degrades single-stranded DNA into large acid-insoluble oligonucleotides, which are then degraded further into small acid-soluble oligonucleotides. This chain is Exodeoxyribonuclease 7 small subunit, found in Pseudomonas aeruginosa (strain LESB58).